The sequence spans 310 residues: Glycine--tRNA ligase alpha subunit (310 aa).

The protein belongs to the class-II aminoacyl-tRNA synthetase family. Tetramer of two alpha and two beta subunits.

The protein localises to the cytoplasm. The catalysed reaction is tRNA(Gly) + glycine + ATP = glycyl-tRNA(Gly) + AMP + diphosphate. The polypeptide is Glycine--tRNA ligase alpha subunit (Agrobacterium fabrum (strain C58 / ATCC 33970) (Agrobacterium tumefaciens (strain C58))).